A 216-amino-acid chain; its full sequence is Imidazole glycerol phosphate synthase subunit HisH (216 aa).

Residues R2–P216 form the Glutamine amidotransferase type-1 domain. C88 (nucleophile) is an active-site residue. Active-site residues include H196 and E198.

In terms of assembly, heterodimer of HisH and HisF.

Its subcellular location is the cytoplasm. It catalyses the reaction 5-[(5-phospho-1-deoxy-D-ribulos-1-ylimino)methylamino]-1-(5-phospho-beta-D-ribosyl)imidazole-4-carboxamide + L-glutamine = D-erythro-1-(imidazol-4-yl)glycerol 3-phosphate + 5-amino-1-(5-phospho-beta-D-ribosyl)imidazole-4-carboxamide + L-glutamate + H(+). The catalysed reaction is L-glutamine + H2O = L-glutamate + NH4(+). It participates in amino-acid biosynthesis; L-histidine biosynthesis; L-histidine from 5-phospho-alpha-D-ribose 1-diphosphate: step 5/9. IGPS catalyzes the conversion of PRFAR and glutamine to IGP, AICAR and glutamate. The HisH subunit catalyzes the hydrolysis of glutamine to glutamate and ammonia as part of the synthesis of IGP and AICAR. The resulting ammonia molecule is channeled to the active site of HisF. This chain is Imidazole glycerol phosphate synthase subunit HisH, found in Brucella melitensis biotype 1 (strain ATCC 23456 / CCUG 17765 / NCTC 10094 / 16M).